A 113-amino-acid polypeptide reads, in one-letter code: U11-theraphotoxin-Hhn1g (113 aa).

The signal sequence occupies residues 1 to 21 (MNTVRVTFLLVFVLAVSLGQA). The propeptide occupies 22 to 74 (DKDENRMEMQEKTEQGKSYLDFAENLLLQKLEELEAKLLEEDSEESRNSRQKR). Positions 61–83 (EEDSEESRNSRQKRCIGEGVPCD) are disordered. 3 disulfide bridges follow: C75/C90, C82/C95, and C89/C110.

It belongs to the neurotoxin 14 (magi-1) family. 01 (HNTX-16) subfamily. As to expression, expressed by the venom gland.

It is found in the secreted. In terms of biological role, probable ion channel inhibitor. The protein is U11-theraphotoxin-Hhn1g of Cyriopagopus hainanus (Chinese bird spider).